The primary structure comprises 352 residues: Hematopoietic SH2 domain-containing protein (352 aa).

The SH2 domain maps to 34–125; that stretch reads WFHGAISRED…PRRELLTQPC (92 aa). 2 disordered regions span residues 157–199 and 241–352; these read EEAS…LGET and VISG…PGYC. The span at 180–191 shows a compositional bias: polar residues; it reads RITTKEATSSCP. Residues 283–295 show a composition bias toward basic and acidic residues; that stretch reads PKDRKVPTRKAER. Positions 343 to 352 are enriched in pro residues; the sequence is QPPPFAPGYC.

As to quaternary structure, interacts with FES and TNK2. Post-translationally, may be phosphorylated by FES and ACK1. Predominantly expressed in spleen and hematopoietic cells such as peripheral blood leukocytes and weakly expressed in prostate, thymus, heart, small intestine and placenta.

It localises to the cytoplasm. The protein localises to the nucleus. Its function is as follows. May be a modulator of the apoptotic response through its ability to affect mitochondrial stability. Adapter protein involved in tyrosine kinase and CD28 signaling. Seems to affect CD28-mediated activation of the RE/AP element of the interleukin-2 promoter. The protein is Hematopoietic SH2 domain-containing protein (HSH2D) of Homo sapiens (Human).